The sequence spans 232 residues: GTP cyclohydrolase 1 (232 aa).

Residues 1–24 (MSDNLKSYQDNHIENEDEEIYERS) are disordered. Zn(2+)-binding residues include Cys121, His124, and Cys192.

It belongs to the GTP cyclohydrolase I family. Toroid-shaped homodecamer, composed of two pentamers of five dimers.

The catalysed reaction is GTP + H2O = 7,8-dihydroneopterin 3'-triphosphate + formate + H(+). It functions in the pathway cofactor biosynthesis; 7,8-dihydroneopterin triphosphate biosynthesis; 7,8-dihydroneopterin triphosphate from GTP: step 1/1. Its function is as follows. First enzyme in the biosynthesis of tetrahydrobiopterin (BH4). Catalyzes the conversion of GTP into dihydroneopterin triphosphate (7,8-dihydroneopterin 3'-triphosphate), which is subsequently catalyzed by 6-pyruvoyltetrahydropterin synthase (ptsA) and sepiapterin reductase (sprA). The sequence is that of GTP cyclohydrolase 1 (gchA) from Dictyostelium discoideum (Social amoeba).